The following is a 217-amino-acid chain: Translation initiation factor 6 (217 aa).

It belongs to the eIF-6 family.

Binds to the 50S ribosomal subunit and prevents its association with the 30S ribosomal subunit to form the 70S initiation complex. The chain is Translation initiation factor 6 from Picrophilus torridus (strain ATCC 700027 / DSM 9790 / JCM 10055 / NBRC 100828 / KAW 2/3).